The following is a 386-amino-acid chain: Succinate--CoA ligase [ADP-forming] subunit beta (386 aa).

Positions 9–244 (KDLLTAYQLP…PSQENIRDVL (236 aa)) constitute an ATP-grasp domain. ATP is bound by residues lysine 46, 53 to 55 (GRG), valine 102, and glutamate 107. Mg(2+)-binding residues include asparagine 199 and aspartate 213. Substrate contacts are provided by residues asparagine 264 and 321–323 (GIM).

The protein belongs to the succinate/malate CoA ligase beta subunit family. In terms of assembly, heterotetramer of two alpha and two beta subunits. Requires Mg(2+) as cofactor.

The catalysed reaction is succinate + ATP + CoA = succinyl-CoA + ADP + phosphate. It catalyses the reaction GTP + succinate + CoA = succinyl-CoA + GDP + phosphate. Its pathway is carbohydrate metabolism; tricarboxylic acid cycle; succinate from succinyl-CoA (ligase route): step 1/1. Functionally, succinyl-CoA synthetase functions in the citric acid cycle (TCA), coupling the hydrolysis of succinyl-CoA to the synthesis of either ATP or GTP and thus represents the only step of substrate-level phosphorylation in the TCA. The beta subunit provides nucleotide specificity of the enzyme and binds the substrate succinate, while the binding sites for coenzyme A and phosphate are found in the alpha subunit. This chain is Succinate--CoA ligase [ADP-forming] subunit beta, found in Chlamydia trachomatis serovar A (strain ATCC VR-571B / DSM 19440 / HAR-13).